The primary structure comprises 516 residues: D-aminopeptidase (516 aa).

S61 functions as the Nucleophile in the catalytic mechanism. K64 serves as the catalytic Proton donor/acceptor. Positions 476–486 are important for specificity; the sequence is RRSMDAPAPGD. Position 480 (D480) interacts with substrate.

It belongs to the peptidase S12 family. Homodimer.

The catalysed reaction is Release of an N-terminal D-amino acid from a peptide, Xaa-|-Yaa-, in which Xaa is preferably D-Ala, D-Ser or D-Thr. D-amino acid amides and methyl esters also are hydrolyzed, as is glycine amide.. Inhibited by beta-lactam compounds such as 6-aminopenicillic acid, 7-aminocephalosporanic acid, benzylpenicillin and ampicillin. Inhibited by p-chloromercuribenzoate. Its function is as follows. Hydrolyzes N-terminal residues in D-amino acid-containing peptides. This is D-aminopeptidase from Cereibacter sphaeroides (strain ATCC 17029 / ATH 2.4.9) (Rhodobacter sphaeroides).